The primary structure comprises 484 residues: Nuclear rim protein 1 (484 aa).

Serine 3 carries the phosphoserine modification. 2 consecutive transmembrane segments (helical) span residues 145–165 (FTIFILLSLNLYVSCKFMFGY) and 252–272 (TAIVFLSFSDVSFTSAIAIVF). The disordered stretch occupies residues 416 to 457 (SSNENLEKGGAFLPNQDQNRPSKSLSPLRKTPLSARQKRFEG). Serine 417 is subject to Phosphoserine. The span at 430 to 440 (NQDQNRPSKSL) shows a compositional bias: polar residues. Residue serine 474 is modified to Phosphoserine.

Belongs to the NUR1 family. In terms of assembly, interacts with CSM1.

It is found in the nucleus membrane. In terms of biological role, member of a perinuclear network that controls recombination at multiple loci to maintain genome stability. Required for rDNA repeat stability. The sequence is that of Nuclear rim protein 1 (NUR1) from Saccharomyces cerevisiae (strain Lalvin EC1118 / Prise de mousse) (Baker's yeast).